The chain runs to 431 residues: Trigger factor (431 aa).

Positions 158–243 (GHLVALETWS…VIEVSEPVLL (86 aa)) constitute a PPIase FKBP-type domain.

Belongs to the FKBP-type PPIase family. Tig subfamily.

The protein resides in the cytoplasm. The enzyme catalyses [protein]-peptidylproline (omega=180) = [protein]-peptidylproline (omega=0). Its function is as follows. Involved in protein export. Acts as a chaperone by maintaining the newly synthesized protein in an open conformation. Functions as a peptidyl-prolyl cis-trans isomerase. The chain is Trigger factor (tig) from Xylella fastidiosa (strain 9a5c).